A 297-amino-acid polypeptide reads, in one-letter code: MGDIFHIPVLLEDVINLVETIYLDDGFVFVDCTLGEGGHSKAVLSKYQNINVIGIERDDVVLNRAKESLVEFSKRISYSNTWFDDFFCKYSLHRRFNFILADLGISMFHYKVGGRGFSFLEDEKLDMRLFPSDGGISAYDIVNTFDKEMLENLIYELGGEYYSRRIVKAILEYRKINKIQTSRELQRIICKAYPNVKFKINPATKTFQALRIYVNDELDRLKRSLPLWIANLSKNGILAIITFHSLEDKIVKEFFKGLTKDQYCILTKKPITSSFKEKQYNNASRSAKLRAVKKLYE.

Residues 37–39 (GGH), E56, F87, D102, and H109 contribute to the S-adenosyl-L-methionine site.

The protein belongs to the methyltransferase superfamily. RsmH family.

The protein localises to the cytoplasm. The enzyme catalyses cytidine(1402) in 16S rRNA + S-adenosyl-L-methionine = N(4)-methylcytidine(1402) in 16S rRNA + S-adenosyl-L-homocysteine + H(+). Functionally, specifically methylates the N4 position of cytidine in position 1402 (C1402) of 16S rRNA. In Borrelia duttonii (strain Ly), this protein is Ribosomal RNA small subunit methyltransferase H.